A 301-amino-acid chain; its full sequence is MSTHQTHLKQLEAESIQIMREVAAEFDNPVMLYSVGKDSSVLLHLARKAFYPGKIPFPLMHVDTNWKFKEMIEFRDQMAEKHGFDLIVHKNPRGLEMNISPFTHGSAKHTDIMKTEGLKQALDAHGFDAAFGGARRDEEKSRAKERVYSFRDNKHRWDPKNQRPELWNIYNGKVDKGESIRVFPLSNWTELDIWQYIYLEGIEIPSLYLATERPVVERDGTLIMVDDERMPLEADEDVQNKMVRFRTLGCYPLTGAVESQAQTLPEIIQEMLLCTTSERQGRVIDNDSAGSMEKKKIEGYF.

This sequence belongs to the PAPS reductase family. CysD subfamily. Heterodimer composed of CysD, the smaller subunit, and CysN.

The catalysed reaction is sulfate + ATP + H(+) = adenosine 5'-phosphosulfate + diphosphate. It functions in the pathway sulfur metabolism; hydrogen sulfide biosynthesis; sulfite from sulfate: step 1/3. Its function is as follows. With CysN forms the ATP sulfurylase (ATPS) that catalyzes the adenylation of sulfate producing adenosine 5'-phosphosulfate (APS) and diphosphate, the first enzymatic step in sulfur assimilation pathway. APS synthesis involves the formation of a high-energy phosphoric-sulfuric acid anhydride bond driven by GTP hydrolysis by CysN coupled to ATP hydrolysis by CysD. This chain is Sulfate adenylyltransferase subunit 2, found in Shewanella woodyi (strain ATCC 51908 / MS32).